We begin with the raw amino-acid sequence, 74 residues long: Exodeoxyribonuclease 7 small subunit (74 aa).

The protein belongs to the XseB family. In terms of assembly, heterooligomer composed of large and small subunits.

It is found in the cytoplasm. The catalysed reaction is Exonucleolytic cleavage in either 5'- to 3'- or 3'- to 5'-direction to yield nucleoside 5'-phosphates.. Bidirectionally degrades single-stranded DNA into large acid-insoluble oligonucleotides, which are then degraded further into small acid-soluble oligonucleotides. The sequence is that of Exodeoxyribonuclease 7 small subunit from Symbiobacterium thermophilum (strain DSM 24528 / JCM 14929 / IAM 14863 / T).